Consider the following 88-residue polypeptide: Transcription factor ILI5 (88 aa).

The region spanning 1 to 54 is the bHLH domain; it reads MSSRRSSRGSISEEEINELISKLQSLLPNSRRRGSSQASTTKLLKETCNYIKSL.

Belongs to the bHLH protein family. In terms of assembly, interacts with APG.

The protein resides in the nucleus. Atypical and probable non DNA-binding bHLH transcription factor that acts as a positive regulator of grain size. Binds the transcription repressor APG and forms a heterodimer of antagonistic basic helix-loop-helix transcription factors that regulates grain length and weight by controlling cell elongation in lemma and palea. This is Transcription factor ILI5 (ILI5) from Oryza sativa subsp. indica (Rice).